We begin with the raw amino-acid sequence, 216 residues long: Probable Golgi SNAP receptor complex member 2 (216 aa).

Residues 1 to 194 (MESLYHQTNN…IERRLVEDRR (194 aa)) lie on the Cytoplasmic side of the membrane. Residues 62 to 103 (QRQSSKLRVDQLKYDLRHLQTSLQTARERRQRRMQEISEREQ) adopt a coiled-coil conformation. The helical; Anchor for type IV membrane protein transmembrane segment at 195–215 (IFIGGVVVTLLIIALIIYFLV) threads the bilayer. Position 216 (Leu-216) is a topological domain, vesicular.

It belongs to the GOSR2 family. Part of a unique SNARE complex.

Its subcellular location is the golgi apparatus. It localises to the cis-Golgi network membrane. The protein resides in the golgi apparatus membrane. It is found in the endoplasmic reticulum membrane. In terms of biological role, involved in transport of proteins from the cis/medial-Golgi to the trans-Golgi network. In Drosophila melanogaster (Fruit fly), this protein is Probable Golgi SNAP receptor complex member 2.